The following is a 100-amino-acid chain: NADH-quinone oxidoreductase subunit K (100 aa).

Transmembrane regions (helical) follow at residues 4–24 (YEYY…GIII), 29–49 (IAML…FVAF), and 60–80 (VFVF…LGLI).

It belongs to the complex I subunit 4L family. In terms of assembly, NDH-1 is composed of 14 different subunits. Subunits NuoA, H, J, K, L, M, N constitute the membrane sector of the complex.

The protein localises to the cell inner membrane. It carries out the reaction a quinone + NADH + 5 H(+)(in) = a quinol + NAD(+) + 4 H(+)(out). Its function is as follows. NDH-1 shuttles electrons from NADH, via FMN and iron-sulfur (Fe-S) centers, to quinones in the respiratory chain. The immediate electron acceptor for the enzyme in this species is believed to be ubiquinone. Couples the redox reaction to proton translocation (for every two electrons transferred, four hydrogen ions are translocated across the cytoplasmic membrane), and thus conserves the redox energy in a proton gradient. The polypeptide is NADH-quinone oxidoreductase subunit K (Persephonella marina (strain DSM 14350 / EX-H1)).